The primary structure comprises 166 residues: Cytochrome P450 regulator dap1 (166 aa).

A helical membrane pass occupies residues 4–21 (TQVVFIVTLFLYLLITRW). A Cytochrome b5 heme-binding domain is found at 42-145 (DYTPAELKEY…QKYQAVGRLI (104 aa)). At serine 108 the chain carries Phosphoserine. Heme is bound at residue tyrosine 138.

This sequence belongs to the cytochrome b5 family. MAPR subfamily. Interacts with erg5 and erg11.

The protein localises to the endoplasmic reticulum. The protein resides in the membrane. Required for sterol biosynthesis. Functions as a positive regulator of cytochrome P450 enzymes erg5 and erg11. Function requires bound heme. This chain is Cytochrome P450 regulator dap1 (dap1), found in Schizosaccharomyces pombe (strain 972 / ATCC 24843) (Fission yeast).